The primary structure comprises 279 residues: Large ribosomal subunit protein uL2 (279 aa).

Residues 222 to 279 (GMAMNPVDHPMGGGEGKSKSGGGRRHPKSPWGQLAKGLKTRNKKKASQKLIVRGRNAK) are disordered. A compositionally biased stretch (gly residues) spans 232 to 242 (MGGGEGKSKSG). Over residues 259 to 268 (LKTRNKKKAS) the composition is skewed to basic residues.

It belongs to the universal ribosomal protein uL2 family. As to quaternary structure, part of the 50S ribosomal subunit. Forms a bridge to the 30S subunit in the 70S ribosome.

Functionally, one of the primary rRNA binding proteins. Required for association of the 30S and 50S subunits to form the 70S ribosome, for tRNA binding and peptide bond formation. It has been suggested to have peptidyltransferase activity; this is somewhat controversial. Makes several contacts with the 16S rRNA in the 70S ribosome. This Chlorobium phaeobacteroides (strain DSM 266 / SMG 266 / 2430) protein is Large ribosomal subunit protein uL2.